A 117-amino-acid chain; its full sequence is Large ribosomal subunit protein bL17 (117 aa).

It belongs to the bacterial ribosomal protein bL17 family. Part of the 50S ribosomal subunit. Contacts protein L32.

This chain is Large ribosomal subunit protein bL17, found in Campylobacter lari (strain RM2100 / D67 / ATCC BAA-1060).